An 894-amino-acid chain; its full sequence is Alanine--tRNA ligase (894 aa).

This sequence belongs to the class-II aminoacyl-tRNA synthetase family.

It is found in the cytoplasm. It carries out the reaction tRNA(Ala) + L-alanine + ATP = L-alanyl-tRNA(Ala) + AMP + diphosphate. Its function is as follows. Catalyzes the attachment of alanine to tRNA(Ala) in a two-step reaction: alanine is first activated by ATP to form Ala-AMP and then transferred to the acceptor end of tRNA(Ala). Also edits incorrectly charged Ser-tRNA(Ala) and Gly-tRNA(Ala) via its editing domain. This Leuconostoc citreum (strain KM20) protein is Alanine--tRNA ligase (alaS).